A 177-amino-acid chain; its full sequence is Transcription antitermination protein NusB (177 aa).

Residues 1–36 (MTEQPTKPTGSRPPRQPRTGLTSTGARKAGSKSDRS) are disordered.

This sequence belongs to the NusB family.

Functionally, involved in transcription antitermination. Required for transcription of ribosomal RNA (rRNA) genes. Binds specifically to the boxA antiterminator sequence of the ribosomal RNA (rrn) operons. This chain is Transcription antitermination protein NusB, found in Albidiferax ferrireducens (strain ATCC BAA-621 / DSM 15236 / T118) (Rhodoferax ferrireducens).